The following is a 331-amino-acid chain: Glycerol-3-phosphate dehydrogenase [NAD(P)+] (331 aa).

Residues Ser-11, Phe-12, Arg-32, and Lys-106 each contribute to the NADPH site. Sn-glycerol 3-phosphate is bound by residues Lys-106, Gly-134, and Ser-136. Ala-138 is a binding site for NADPH. Sn-glycerol 3-phosphate is bound by residues Lys-189, Asp-242, Ser-252, Arg-253, and Asn-254. The active-site Proton acceptor is the Lys-189. Residue Arg-253 coordinates NADPH. Val-277 and Glu-279 together coordinate NADPH.

It belongs to the NAD-dependent glycerol-3-phosphate dehydrogenase family.

The protein resides in the cytoplasm. The enzyme catalyses sn-glycerol 3-phosphate + NAD(+) = dihydroxyacetone phosphate + NADH + H(+). The catalysed reaction is sn-glycerol 3-phosphate + NADP(+) = dihydroxyacetone phosphate + NADPH + H(+). It functions in the pathway membrane lipid metabolism; glycerophospholipid metabolism. Catalyzes the reduction of the glycolytic intermediate dihydroxyacetone phosphate (DHAP) to sn-glycerol 3-phosphate (G3P), the key precursor for phospholipid synthesis. The chain is Glycerol-3-phosphate dehydrogenase [NAD(P)+] from Clostridium perfringens (strain ATCC 13124 / DSM 756 / JCM 1290 / NCIMB 6125 / NCTC 8237 / Type A).